The sequence spans 524 residues: Probable aminopeptidase NPEPL1 (524 aa).

Zn(2+) contacts are provided by K260 and D265. K272 is a catalytic residue. Zn(2+) contacts are provided by D283, D342, and E344. R346 is a catalytic residue.

This sequence belongs to the peptidase M17 family. Zn(2+) is required as a cofactor. The cofactor is Mn(2+).

Its function is as follows. Probably catalyzes the removal of unsubstituted N-terminal amino acids from various peptides. The sequence is that of Probable aminopeptidase NPEPL1 (Npepl1) from Mus musculus (Mouse).